The chain runs to 274 residues: Large ribosomal subunit protein bL28m (274 aa).

The segment at serine 249–alanine 274 is disordered. Basic and acidic residues predominate over residues leucine 262–alanine 274.

This sequence belongs to the bacterial ribosomal protein bL28 family. Component of the mitochondrial large ribosomal subunit (mt-LSU). Mature N.crassa 74S mitochondrial ribosomes consist of a small (37S) and a large (54S) subunit. The 37S small subunit contains a 16S ribosomal RNA (16S mt-rRNA) and 32 different proteins. The 54S large subunit contains a 23S rRNA (23S mt-rRNA) and 42 different proteins.

Its subcellular location is the mitochondrion. In terms of biological role, component of the mitochondrial ribosome (mitoribosome), a dedicated translation machinery responsible for the synthesis of mitochondrial genome-encoded proteins, including at least some of the essential transmembrane subunits of the mitochondrial respiratory chain. The mitoribosomes are attached to the mitochondrial inner membrane and translation products are cotranslationally integrated into the membrane. This is Large ribosomal subunit protein bL28m (mrpl24) from Neurospora crassa (strain ATCC 24698 / 74-OR23-1A / CBS 708.71 / DSM 1257 / FGSC 987).